The chain runs to 90 residues: FEARFRFVEEIIRWGADARTDGHHAVVRGIRQLSSAPVWSSDIRAGAGLVLAGLVADGVTEVYDVFHIDRGYPLFVENLQSLGAEVERVS.

This sequence belongs to the EPSP synthase family. MurA subfamily.

The protein resides in the cytoplasm. It catalyses the reaction phosphoenolpyruvate + UDP-N-acetyl-alpha-D-glucosamine = UDP-N-acetyl-3-O-(1-carboxyvinyl)-alpha-D-glucosamine + phosphate. Its pathway is cell wall biogenesis; peptidoglycan biosynthesis. Its function is as follows. Cell wall formation. Adds enolpyruvyl to UDP-N-acetylglucosamine. The polypeptide is UDP-N-acetylglucosamine 1-carboxyvinyltransferase (murA) (Mycobacteroides chelonae (Mycobacterium chelonae)).